A 435-amino-acid polypeptide reads, in one-letter code: Trigger factor (435 aa).

Residues 163–248 (GELASVTFSA…VHAVKERKMP (86 aa)) form the PPIase FKBP-type domain.

This sequence belongs to the FKBP-type PPIase family. Tig subfamily.

The protein resides in the cytoplasm. The catalysed reaction is [protein]-peptidylproline (omega=180) = [protein]-peptidylproline (omega=0). Involved in protein export. Acts as a chaperone by maintaining the newly synthesized protein in an open conformation. Functions as a peptidyl-prolyl cis-trans isomerase. The polypeptide is Trigger factor (Maridesulfovibrio salexigens (strain ATCC 14822 / DSM 2638 / NCIMB 8403 / VKM B-1763) (Desulfovibrio salexigens)).